Consider the following 140-residue polypeptide: Large ribosomal subunit protein bL17 (140 aa).

Belongs to the bacterial ribosomal protein bL17 family. As to quaternary structure, part of the 50S ribosomal subunit. Contacts protein L32.

The chain is Large ribosomal subunit protein bL17 from Rhizobium etli (strain ATCC 51251 / DSM 11541 / JCM 21823 / NBRC 15573 / CFN 42).